The chain runs to 98 residues: Co-chaperonin GroES (98 aa).

This sequence belongs to the GroES chaperonin family. In terms of assembly, heptamer of 7 subunits arranged in a ring. Interacts with the chaperonin GroEL.

The protein localises to the cytoplasm. Its function is as follows. Together with the chaperonin GroEL, plays an essential role in assisting protein folding. The GroEL-GroES system forms a nano-cage that allows encapsulation of the non-native substrate proteins and provides a physical environment optimized to promote and accelerate protein folding. GroES binds to the apical surface of the GroEL ring, thereby capping the opening of the GroEL channel. The polypeptide is Co-chaperonin GroES (Bartonella bacilliformis (strain ATCC 35685 / KC583 / Herrer 020/F12,63)).